The sequence spans 374 residues: Histidinol-phosphate aminotransferase 1 (374 aa).

Lys232 bears the N6-(pyridoxal phosphate)lysine mark.

The protein belongs to the class-II pyridoxal-phosphate-dependent aminotransferase family. Histidinol-phosphate aminotransferase subfamily. In terms of assembly, homodimer. It depends on pyridoxal 5'-phosphate as a cofactor.

The enzyme catalyses L-histidinol phosphate + 2-oxoglutarate = 3-(imidazol-4-yl)-2-oxopropyl phosphate + L-glutamate. Its pathway is amino-acid biosynthesis; L-histidine biosynthesis; L-histidine from 5-phospho-alpha-D-ribose 1-diphosphate: step 7/9. The polypeptide is Histidinol-phosphate aminotransferase 1 (hisC1) (Ralstonia nicotianae (strain ATCC BAA-1114 / GMI1000) (Ralstonia solanacearum)).